The sequence spans 127 residues: Modulator protein MzrA (127 aa).

At 1 to 10 the chain is on the cytoplasmic side; it reads MQIPRMSLRQ. A helical transmembrane segment spans residues 11–31; sequence LAWSGAVLLLVGTLLLAWSAV. Over 32-127 the chain is Periplasmic; that stretch reads RQQESTLAIR…RLRDNSHRFG (96 aa).

It belongs to the MzrA family. Interacts with EnvZ.

It localises to the cell inner membrane. Functionally, modulates the activity of the EnvZ/OmpR two-component regulatory system, probably by directly modulating EnvZ enzymatic activity and increasing stability of phosphorylated OmpR. Links the two-component systems CpxA/CpxR and EnvZ/OmpR. The sequence is that of Modulator protein MzrA from Escherichia coli (strain K12).